Reading from the N-terminus, the 814-residue chain is Cadherin-15 (814 aa).

The N-terminal stretch at 1-21 (MDAAFLLVLGLLAQSLCLSLG) is a signal peptide. Positions 22–60 (VPGWRRPTTLYPWRRAPALSRVRRAWVIPPISVSENHKR) are excised as a propeptide. Cadherin domains are found at residues 61–152 (LPYP…RPAF), 153–260 (LQEA…APEF), 261–375 (TRDE…PPVF), 376–481 (QENP…DHAP), and 482–590 (VLAP…VCLP). The Extracellular portion of the chain corresponds to 61 to 606 (LPYPLVQIKS…AGGTGLSLGA (546 aa)). N-linked (GlcNAc...) asparagine glycosylation occurs at asparagine 227. 3 N-linked (GlcNAc...) asparagine glycosylation sites follow: asparagine 531, asparagine 538, and asparagine 576. The chain crosses the membrane as a helical span at residues 607–626 (LVIVLASALLLLVLVLLVAL). The Cytoplasmic segment spans residues 627 to 814 (RARFWKQSRG…LLPRHRGRTA (188 aa)). Disordered regions lie at residues 636 to 663 (GKGLLHGPQDDLRDNVLNYDEQGGGEED) and 676 to 703 (TALSLPLGPPPLRRDAPQGRLHPQPPRV).

As to expression, expressed in the brain and cerebellum.

The protein resides in the cell membrane. In terms of biological role, cadherins are calcium-dependent cell adhesion proteins. They preferentially interact with themselves in a homophilic manner in connecting cells; cadherins may thus contribute to the sorting of heterogeneous cell types. M-cadherin is part of the myogenic program and may provide a trigger for terminal muscle differentiation. The sequence is that of Cadherin-15 (CDH15) from Homo sapiens (Human).